The chain runs to 348 residues: Nicotinate-nucleotide--dimethylbenzimidazole phosphoribosyltransferase (348 aa).

Residue E316 is the Proton acceptor of the active site.

Belongs to the CobT family.

It carries out the reaction 5,6-dimethylbenzimidazole + nicotinate beta-D-ribonucleotide = alpha-ribazole 5'-phosphate + nicotinate + H(+). It functions in the pathway nucleoside biosynthesis; alpha-ribazole biosynthesis; alpha-ribazole from 5,6-dimethylbenzimidazole: step 1/2. Functionally, catalyzes the synthesis of alpha-ribazole-5'-phosphate from nicotinate mononucleotide (NAMN) and 5,6-dimethylbenzimidazole (DMB). In Xanthomonas oryzae pv. oryzae (strain PXO99A), this protein is Nicotinate-nucleotide--dimethylbenzimidazole phosphoribosyltransferase.